Consider the following 189-residue polypeptide: Peptidyl-tRNA hydrolase (189 aa).

Tyr15 is a binding site for tRNA. The Proton acceptor role is filled by His20. The tRNA site is built by Phe66, Asn68, and Asn114.

It belongs to the PTH family. Monomer.

It localises to the cytoplasm. The enzyme catalyses an N-acyl-L-alpha-aminoacyl-tRNA + H2O = an N-acyl-L-amino acid + a tRNA + H(+). Hydrolyzes ribosome-free peptidyl-tRNAs (with 1 or more amino acids incorporated), which drop off the ribosome during protein synthesis, or as a result of ribosome stalling. Its function is as follows. Catalyzes the release of premature peptidyl moieties from peptidyl-tRNA molecules trapped in stalled 50S ribosomal subunits, and thus maintains levels of free tRNAs and 50S ribosomes. The polypeptide is Peptidyl-tRNA hydrolase (Streptococcus gordonii (strain Challis / ATCC 35105 / BCRC 15272 / CH1 / DL1 / V288)).